Here is a 187-residue protein sequence, read N- to C-terminus: Threonylcarbamoyl-AMP synthase (187 aa).

In terms of domain architecture, YrdC-like spans 4–187 (TLTLSEAVTA…DARSGHILRL (184 aa)).

It belongs to the SUA5 family. TsaC subfamily.

Its subcellular location is the cytoplasm. The catalysed reaction is L-threonine + hydrogencarbonate + ATP = L-threonylcarbamoyladenylate + diphosphate + H2O. Required for the formation of a threonylcarbamoyl group on adenosine at position 37 (t(6)A37) in tRNAs that read codons beginning with adenine. Catalyzes the conversion of L-threonine, HCO(3)(-)/CO(2) and ATP to give threonylcarbamoyl-AMP (TC-AMP) as the acyladenylate intermediate, with the release of diphosphate. This chain is Threonylcarbamoyl-AMP synthase, found in Xylella fastidiosa (strain M23).